The chain runs to 362 residues: Tyrosine-protein kinase SRK2 (362 aa).

An SH2 domain is found at 1–70 (TFLVRESESK…GLCVNLRQPC (70 aa)). Positions 95–348 (ITLIRKLGAG…ALQWRLEDFF (254 aa)) constitute a Protein kinase domain. ATP is bound by residues 101 to 109 (LGAGQFGEV) and lysine 123. Aspartate 214 functions as the Proton acceptor in the catalytic mechanism.

This sequence belongs to the protein kinase superfamily. Tyr protein kinase family.

It is found in the cytoplasm. It catalyses the reaction L-tyrosyl-[protein] + ATP = O-phospho-L-tyrosyl-[protein] + ADP + H(+). This Spongilla lacustris (Freshwater sponge) protein is Tyrosine-protein kinase SRK2 (SRK2).